The following is a 462-amino-acid chain: Glycoprotein endo-alpha-1,2-mannosidase (462 aa).

Over 1–8 the chain is Cytoplasmic; it reads MAKFRRRT. A helical; Signal-anchor for type II membrane protein membrane pass occupies residues 9–29; it reads CIILALFILFIFSLMMGLKML. The Lumenal segment spans residues 30–462; the sequence is RPNTATFGAP…YALDRQLPVS (433 aa). Positions 60–462 are catalytic; it reads DFQKSDRINS…YALDRQLPVS (403 aa).

It belongs to the glycosyl hydrolase 99 family. Post-translationally, undergoes proteolytic cleavage in the C-terminal region. Highly expressed in the liver and kidney. Expressed at lower levels in muscle, pancreas, heart, placenta, lung and brain.

The protein localises to the golgi apparatus membrane. It carries out the reaction N-{alpha-Glc-(1-&gt;3)-alpha-Man-(1-&gt;2)-alpha-Man-(1-&gt;2)-alpha-Man-(1-&gt;3)-[alpha-Man-(1-&gt;2)-alpha-Man-(1-&gt;3)-[alpha-Man-(1-&gt;2)-alpha-Man-(1-&gt;6)]-alpha-Man-(1-&gt;6)]-beta-Man-(1-&gt;4)-beta-GlcNAc-(1-&gt;4)-beta-GlcNAc}-L-asparaginyl-[protein] + H2O = alpha-D-glucosyl-(1-&gt;3)-D-mannopyranose + N(4)-{alpha-D-Man-(1-&gt;2)-alpha-D-Man-(1-&gt;3)-[alpha-D-Man-(1-&gt;2)-alpha-D-Man-(1-&gt;3)-[alpha-D-Man-(1-&gt;2)-alpha-D-Man-(1-&gt;6)]-alpha-D-Man-(1-&gt;6)]-beta-D-Man-(1-&gt;4)-beta-D-GlaNAc-(1-&gt;4)-beta-D-GlcNAc}-L-asparaginyl-[protein] (N-glucan mannose isomer 8A1,2,3B1,2). The chain is Glycoprotein endo-alpha-1,2-mannosidase (MANEA) from Homo sapiens (Human).